Reading from the N-terminus, the 343-residue chain is MTTITITRPDDWHIHLRDGAQLKDTVRDISRYMGRAIVMPNLVPPAIDTETALAYYDRIKAQVPAGSQFEPLMVLYLTDKTSPDEIRKAKASGKIVAAKLYPAGATTNSDSGVTDVKNIYPVLQAMQEVGMLFLVHGEVTDSAIDIFDRERVFIENILSKIVADFPALKIVLEHITTKDAVDFVTQASDNVAATITAHHLLYNRNHMLAGGIRPHFYCLPILKRNTHQQALLGAAASGNKKFFLGTDSAPHAKDKKEAACGCAGSYTAHAAIELYAEAFESVNALDKLEAFASFNGPDFYNLPRNSDTITLVKKSWDVPATYPLGDTNVVPIRAGEAIDWQVE.

His-13 and His-15 together coordinate Zn(2+). Residues 15–17 and Asn-41 contribute to the substrate site; that span reads HLR. Lys-99, His-136, and His-174 together coordinate Zn(2+). The residue at position 99 (Lys-99) is an N6-carboxylysine. His-136 lines the substrate pocket. Residue Leu-219 coordinates substrate. Asp-247 contacts Zn(2+). The active site involves Asp-247. The substrate site is built by His-251 and Ala-263.

Belongs to the metallo-dependent hydrolases superfamily. DHOase family. Class II DHOase subfamily. As to quaternary structure, homodimer. Requires Zn(2+) as cofactor.

It catalyses the reaction (S)-dihydroorotate + H2O = N-carbamoyl-L-aspartate + H(+). It functions in the pathway pyrimidine metabolism; UMP biosynthesis via de novo pathway; (S)-dihydroorotate from bicarbonate: step 3/3. Catalyzes the reversible cyclization of carbamoyl aspartate to dihydroorotate. The sequence is that of Dihydroorotase from Shewanella putrefaciens (strain CN-32 / ATCC BAA-453).